The chain runs to 1072 residues: DNA-directed RNA polymerase subunit beta (1072 aa).

The protein belongs to the RNA polymerase beta chain family. In plastids the minimal PEP RNA polymerase catalytic core is composed of four subunits: alpha, beta, beta', and beta''. When a (nuclear-encoded) sigma factor is associated with the core the holoenzyme is formed, which can initiate transcription.

The protein resides in the plastid. Its subcellular location is the chloroplast. The enzyme catalyses RNA(n) + a ribonucleoside 5'-triphosphate = RNA(n+1) + diphosphate. Functionally, DNA-dependent RNA polymerase catalyzes the transcription of DNA into RNA using the four ribonucleoside triphosphates as substrates. The polypeptide is DNA-directed RNA polymerase subunit beta (Capsella bursa-pastoris (Shepherd's purse)).